A 121-amino-acid polypeptide reads, in one-letter code: MKLKFSKHTSERKVNRLKKKIRIRKTVKGTAERPRLCVFRSGKHVYAQIINDVDGNTLVAVSSLGKEDKSGIDMAKLVGMEAAKAATAKNIKDVVFDRNGYLYHGRVKSLADGAREGGLNF.

This sequence belongs to the universal ribosomal protein uL18 family. As to quaternary structure, part of the 50S ribosomal subunit; part of the 5S rRNA/L5/L18/L25 subcomplex. Contacts the 5S and 23S rRNAs.

Its function is as follows. This is one of the proteins that bind and probably mediate the attachment of the 5S RNA into the large ribosomal subunit, where it forms part of the central protuberance. The polypeptide is Large ribosomal subunit protein uL18 (Bdellovibrio bacteriovorus (strain ATCC 15356 / DSM 50701 / NCIMB 9529 / HD100)).